Consider the following 68-residue polypeptide: Conotoxin Eb11.7 (68 aa).

Positions 1–26 (MMFRLTSVSCFLLVIVCLNLFQVVLT) are cleaved as a signal peptide. 4 disulfide bridges follow: C29–C43, C36–C48, C42–C52, and C47–C56. Residue F60 is modified to Phenylalanine amide. Residues 64 to 68 (ATFQE) constitute a propeptide that is removed on maturation.

Belongs to the conotoxin I2 superfamily. Expressed by the venom duct.

The protein resides in the secreted. This chain is Conotoxin Eb11.7, found in Conus eburneus (Ivory cone).